Here is a 444-residue protein sequence, read N- to C-terminus: Type VII secretion system protein EssB (444 aa).

At 1 to 229 (MVKNHNPKNE…RKVGHTVFKW (229 aa)) the chain is on the cytoplasmic side. The chain crosses the membrane as a helical span at residues 230–250 (VAIGMTTLSVLLIAFLAFLYF). Residues 251-444 (SVMKHNERIE…EKRQEAERKK (194 aa)) lie on the Extracellular side of the membrane. Positions 366–444 (KNNGDLSNDK…EKRQEAERKK (79 aa)) are disordered. A compositionally biased stretch (basic and acidic residues) spans 372–444 (SNDKRSEETK…EKRQEAERKK (73 aa)). The stretch at 387 to 443 (LQDILDKEKQVKDEKAKSEEEKAKAKDEKLKQQEENEKKQKEQAQKDKEKRQEAERK) forms a coiled coil.

It belongs to the EssB family. In terms of assembly, may oligomerize and interact with other membrane components to form the Ess system. Interacts with EsaA.

It is found in the cell membrane. Functionally, component of the type VII secretion system (Ess). Required for the secretion of EsxA and proper accumulation of EssB and EssD. The chain is Type VII secretion system protein EssB from Staphylococcus aureus (strain USA300).